Reading from the N-terminus, the 477-residue chain is Salivary plasminogen activator alpha 1 (477 aa).

The N-terminal stretch at 1-36 (MVNTMKTKLLCVLLLCGAVFSLPRQETYRQLARGSR) is a signal peptide. The region spanning 40-82 (VACKDEITQMTYRRQESWLRPEVRSKRVEHCQCDRGQARCHTV) is the Fibronectin type-I domain. 14 disulfides stabilise this stretch: Cys42-Cys72, Cys70-Cys79, Cys87-Cys98, Cys92-Cys109, Cys111-Cys120, Cys128-Cys209, Cys149-Cys191, Cys180-Cys204, Cys214-Cys345, Cys257-Cys273, Cys265-Cys334, Cys359-Cys434, Cys391-Cys407, and Cys424-Cys452. An EGF-like domain is found at 83–121 (PVNSCSEPRCFNGGTCWQAVYFSDFVCQCPAGYTGKRCE). The Kringle domain maps to 128 to 209 (CYEGQGVTYR…TSESCSVPVC (82 aa)). Asn153 carries an N-linked (GlcNAc...) asparagine glycan. One can recognise a Peptidase S1 domain in the interval 226–476 (STGGLFTDIT…YLGWIRDNMH (251 aa)). Residues His272 and Asp321 each act as charge relay system in the active site. A glycan (N-linked (GlcNAc...) asparagine) is linked at Asn398. Ser428 functions as the Charge relay system in the catalytic mechanism.

It belongs to the peptidase S1 family. As to quaternary structure, monomer.

The protein localises to the secreted. It catalyses the reaction Specific cleavage of Arg-|-Val bond in plasminogen to form plasmin.. With respect to regulation, activity toward plasminogen is stimulated in the presence of fibrin I. Probably essential to support the feeding habits of this exclusively haematophagous animal. Potent thrombolytic agent. In Desmodus rotundus (Vampire bat), this protein is Salivary plasminogen activator alpha 1.